A 109-amino-acid chain; its full sequence is Fluoride-specific ion channel FluC 1 (109 aa).

The next 3 helical transmembrane spans lie at 21 to 41 (LFIN…GFFI), 52 to 72 (IILS…YFLY), and 84 to 104 (IIFC…GFWI).

The protein belongs to the fluoride channel Fluc/FEX (TC 1.A.43) family.

It localises to the cell inner membrane. The enzyme catalyses fluoride(in) = fluoride(out). Fluoride-specific ion channel. Important for reducing fluoride concentration in the cell, thus reducing its toxicity. In Prochlorococcus marinus (strain MIT 9312), this protein is Fluoride-specific ion channel FluC 1.